The chain runs to 746 residues: MEICYVQEVASSLVREFLSRKGLKKTSLTLEEELPRAPRSISTRNELRAALHLDRLYKENKLTEKPLKTLLEIMTKYFLEHSGKTKALNMRGEQNPAPPKGLATNLQQRHAGDLMMAVCDVSDDETGESSAVSDTSKTEIYRSQNDLQFNKSNHLKGPDRKQKQTEAGVTSTGVCSEGELMPPRVNIREHQERESWEMALGAKSSRSETQRPRSSRMVRGMMSGPTASSQEDSLKKRGPRRSAAANTPNPIKGEVLSEITGGMGEPSTIAPANTALKLGKEFAAKLLSTSENLRNVSLCSTNAVPKPNAFAAAETAADGKGATEASPYASNEHRRRSGFSNMDLNSASLAKKTLPFHRERNDKEDLKLDDVEDCLVTEEIRNIPTALPGNLKQIEGKPIDLAQAVEIKKILFGSSFCCFSDEWKIQSFTFNNNQPLRYGFIQKKGGPCGVLAAVQGCVLKNLLFGKDADLRVLQPSDSQRTSCLCKAIADILWRAGDNKEAVVALSCGRPQFSPAGRYKADGILESLILYKIRKYEDLMGFVQQHISQFELGPFGCTLLTLSVVLSRSVELVQKDFDVSTNCLIGAHSYCTQELVNLILSGRAVSNVFNDVVELDSGNGNITLLRGVAHRTDIGFLSLFEHYNVCQVGSYLKTPRFPIWVICSESHFSVLFCVRRELMSDWKMERRFDLYYYDGLANQQDEIRLTVDTAATYIEEQENDLTPPLEHCIRTKWKGAVIDWNGTEPIL.

3 disordered regions span residues 123–179 (DDET…SEGE), 198–254 (MALG…IKGE), and 319–342 (GKGA…FSNM). 2 stretches are compositionally biased toward polar residues: residues 141 to 152 (YRSQNDLQFNKS) and 165 to 174 (TEAGVTSTGV). Cys448 acts as the Nucleophile in catalysis. The active-site Proton acceptor is His666.

This sequence belongs to the MINDY deubiquitinase family. FAM188 subfamily.

It catalyses the reaction Thiol-dependent hydrolysis of ester, thioester, amide, peptide and isopeptide bonds formed by the C-terminal Gly of ubiquitin (a 76-residue protein attached to proteins as an intracellular targeting signal).. Probable hydrolase that can remove 'Lys-48'-linked conjugated ubiquitin from proteins. This Xenopus tropicalis (Western clawed frog) protein is Probable ubiquitin carboxyl-terminal hydrolase MINDY-4 (mindy4).